A 520-amino-acid polypeptide reads, in one-letter code: Cytosol aminopeptidase (520 aa).

Residues Lys286 and Asp291 each coordinate Zn(2+). The active site involves Lys298. Positions 309, 368, and 370 each coordinate Zn(2+). Arg372 is an active-site residue.

The protein belongs to the peptidase M17 family. Homohexamer. Zn(2+) is required as a cofactor.

The protein localises to the cytoplasm. It carries out the reaction Release of an N-terminal amino acid, Xaa-|-Yaa-, in which Xaa is preferably Leu, but may be other amino acids including Pro although not Arg or Lys, and Yaa may be Pro. Amino acid amides and methyl esters are also readily hydrolyzed, but rates on arylamides are exceedingly low.. The enzyme catalyses Release of N-terminal proline from a peptide.. In terms of biological role, presumably involved in the processing and regular turnover of intracellular proteins. Catalyzes the removal of unsubstituted N-terminal amino acids from various peptides. The protein is Cytosol aminopeptidase (lap) of Dictyostelium discoideum (Social amoeba).